The following is a 548-amino-acid chain: Rhodopsin kinase GRK7 (548 aa).

Ser-34 carries the post-translational modification Phosphoserine; by PKA. The RGS domain maps to 54–171 (FHSLCEQQPI…LASPFYDRFL (118 aa)). One can recognise a Protein kinase domain in the interval 186 to 449 (FTEFRVLGKG…ADDPRKHPFF (264 aa)). ATP-binding positions include 192-200 (LGKGGFGEV) and Lys-215. Asp-311 (proton acceptor) is an active-site residue. The region spanning 450–515 (QTVNFPRLEA…GAVPVAWQEE (66 aa)) is the AGC-kinase C-terminal domain. The disordered stretch occupies residues 523–548 (EELNDPNRPSGDGKGDSSKSGVCLLL). Cysteine methyl ester is present on Cys-545. The S-geranylgeranyl cysteine moiety is linked to residue Cys-545. The propeptide at 546–548 (LLL) is removed in mature form.

This sequence belongs to the protein kinase superfamily. AGC Ser/Thr protein kinase family. GPRK subfamily. Interacts (when prenylated) with PDE6D; this promotes release from membranes. Autophosphorylated. Phosphorylation at Ser-34 is regulated by light and activated by cAMP. Retina. Cones and rod.

It is found in the membrane. The catalysed reaction is L-threonyl-[rhodopsin] + ATP = O-phospho-L-threonyl-[rhodopsin] + ADP + H(+). It carries out the reaction L-seryl-[rhodopsin] + ATP = O-phospho-L-seryl-[rhodopsin] + ADP + H(+). With respect to regulation, inhibited by phosphorylation of Ser-34. Retina-specific kinase involved in the shutoff of the photoresponse and adaptation to changing light conditions via cone opsin phosphorylation, including rhodopsin (RHO). The chain is Rhodopsin kinase GRK7 (GRK7) from Ictidomys tridecemlineatus (Thirteen-lined ground squirrel).